We begin with the raw amino-acid sequence, 339 residues long: MAIKIGINGFGRIGRIVFRAAQHRDDIEVVGINDLIDVEYMAYMLKYDSTHGRFDGTVEVKDGNLVVNGKTIRVTAERDPANLNWGAIGVDIAVEATGLFLTDETARKHITAGAKKVVLTGPSKDATPMFVRGVNFNAYAGQDIVSNASCTTNCLAPLARVVHETFGIKDGLMTTVHATTATQKTVDGPSAKDWRGGRGASQNIIPSSTGAAKAVGKVLPALNGKLTGMAFRVPTPNVSVVDLTVNLEKPASYDAIKQAIKDAAEGKTFNGELKGVLGYTEDAVVSTDFNGCALTSVFDADAGIALTDSFVKLVSWYDNETGYSNKVLDLVAHIYNYKG.

Residues 12–13 (RI), Asp34, Arg78, and Thr120 each bind NAD(+). Residues 149 to 151 (SCT), Thr180, 209 to 210 (TG), and Arg232 each bind D-glyceraldehyde 3-phosphate. Catalysis depends on Cys150, which acts as the Nucleophile. Position 319 (Asn319) interacts with NAD(+).

This sequence belongs to the glyceraldehyde-3-phosphate dehydrogenase family. As to quaternary structure, homotetramer.

It is found in the cytoplasm. It catalyses the reaction D-glyceraldehyde 3-phosphate + phosphate + NAD(+) = (2R)-3-phospho-glyceroyl phosphate + NADH + H(+). Its pathway is carbohydrate degradation; glycolysis; pyruvate from D-glyceraldehyde 3-phosphate: step 1/5. In terms of biological role, catalyzes the oxidative phosphorylation of glyceraldehyde 3-phosphate (G3P) to 1,3-bisphosphoglycerate (BPG) using the cofactor NAD. The first reaction step involves the formation of a hemiacetal intermediate between G3P and a cysteine residue, and this hemiacetal intermediate is then oxidized to a thioester, with concomitant reduction of NAD to NADH. The reduced NADH is then exchanged with the second NAD, and the thioester is attacked by a nucleophilic inorganic phosphate to produce BPG. The polypeptide is Glyceraldehyde-3-phosphate dehydrogenase (gapA) (Haemophilus influenzae (strain ATCC 51907 / DSM 11121 / KW20 / Rd)).